The primary structure comprises 379 residues: 1-deoxy-D-xylulose 5-phosphate reductoisomerase (379 aa).

7 residues coordinate NADPH: threonine 10, glycine 11, serine 12, isoleucine 13, glycine 36, asparagine 38, and asparagine 121. Lysine 122 is a binding site for 1-deoxy-D-xylulose 5-phosphate. Position 123 (glutamate 123) interacts with NADPH. Aspartate 147 contributes to the Mn(2+) binding site. Residues serine 148, glutamate 149, serine 173, and histidine 196 each contribute to the 1-deoxy-D-xylulose 5-phosphate site. Position 149 (glutamate 149) interacts with Mn(2+). NADPH is bound at residue glycine 202. 1-deoxy-D-xylulose 5-phosphate-binding residues include serine 209, asparagine 214, lysine 215, and glutamate 218. A Mn(2+)-binding site is contributed by glutamate 218.

Belongs to the DXR family. Mg(2+) is required as a cofactor. Mn(2+) serves as cofactor.

It carries out the reaction 2-C-methyl-D-erythritol 4-phosphate + NADP(+) = 1-deoxy-D-xylulose 5-phosphate + NADPH + H(+). The protein operates within isoprenoid biosynthesis; isopentenyl diphosphate biosynthesis via DXP pathway; isopentenyl diphosphate from 1-deoxy-D-xylulose 5-phosphate: step 1/6. In terms of biological role, catalyzes the NADPH-dependent rearrangement and reduction of 1-deoxy-D-xylulose-5-phosphate (DXP) to 2-C-methyl-D-erythritol 4-phosphate (MEP). This chain is 1-deoxy-D-xylulose 5-phosphate reductoisomerase, found in Shouchella clausii (strain KSM-K16) (Alkalihalobacillus clausii).